Consider the following 70-residue polypeptide: Protein SlyX homolog (70 aa).

Belongs to the SlyX family.

This Agrobacterium fabrum (strain C58 / ATCC 33970) (Agrobacterium tumefaciens (strain C58)) protein is Protein SlyX homolog.